We begin with the raw amino-acid sequence, 567 residues long: MSSGLKTQTTIDILHDHSVESSSDHLYILKQQQQHQHEDTDSPKKKKLRHQCEETSQYIVPSLNDEVDDLGHHHLHHHHVNNINNSLLKQGLSALSSLSASSTSSISPSSSQSSSPLKQSERSIATSIDSMNDSTSSSSSSNNNNNFSSVPSHNIYTPSCLLSNLNNDTDSIIPNMNGSTDGDGGDIRREKVDENDEEVLCNDNHLSKDNEQEDNMVSFLNESNEEVIQTNNNNNNDNNNSSNICINNFCNINNNQQQQQQQQQQQQNNVNSSIILEDSNKENKTESNNSNSNSNSSPSFFHNLQQHPTSAATTTTTTTTTITTTSATTSIIIKEDNSDDEIDDECDDESEEEEEDEEEFNPFLFIKQLANATTMPPPVALPPKEHSSPKISLVLDLDETLVHCSTEPLEQPHLTFPVFFNNTEYQVFAKKRPFFEEFLHKVSDIFEVIIFTASQEVYANKLLNMIDPNNKIKYRLYRDSCVYVDGNYLKDLSVLGRDLKQVVIIDNSPQSFGFQVDNGIPIESWFEDENDKELLQLVPFLESLTNVEDVRPHIRDKFKLYQLISQA.

Disordered stretches follow at residues 31–53, 100–150, and 280–361; these read QQQQ…HQCE, ASST…FSSV, and NKEN…EEFN. Low complexity-rich tracts occupy residues 100-118, 130-150, and 286-297; these read ASST…SPLK, SMND…FSSV, and ESNNSNSNSNSS. The segment covering 298-308 has biased composition (polar residues); sequence PSFFHNLQQHP. Residues 309–332 are compositionally biased toward low complexity; the sequence is TSAATTTTTTTTTITTTSATTSII. Over residues 337-360 the composition is skewed to acidic residues; sequence NSDDEIDDECDDESEEEEEDEEEF. The FCP1 homology domain occupies 386 to 544; the sequence is HSSPKISLVL…LQLVPFLESL (159 aa).

Belongs to the CTDSPL2 family.

Functionally, probable phosphatase. In Dictyostelium discoideum (Social amoeba), this protein is CTD small phosphatase-like protein 2 (ctdspl2).